The following is a 136-amino-acid chain: Large ribosomal subunit protein uL22 (136 aa).

This sequence belongs to the universal ribosomal protein uL22 family. In terms of assembly, part of the 50S ribosomal subunit.

Its function is as follows. This protein binds specifically to 23S rRNA; its binding is stimulated by other ribosomal proteins, e.g. L4, L17, and L20. It is important during the early stages of 50S assembly. It makes multiple contacts with different domains of the 23S rRNA in the assembled 50S subunit and ribosome. The globular domain of the protein is located near the polypeptide exit tunnel on the outside of the subunit, while an extended beta-hairpin is found that lines the wall of the exit tunnel in the center of the 70S ribosome. This chain is Large ribosomal subunit protein uL22, found in Bacteroides thetaiotaomicron (strain ATCC 29148 / DSM 2079 / JCM 5827 / CCUG 10774 / NCTC 10582 / VPI-5482 / E50).